The sequence spans 705 residues: Prolyl endopeptidase (705 aa).

The signal sequence occupies residues 1–20 (MKYNKLSVAVAAFAFAAVSA). Active-site charge relay system residues include Ser556 and His675.

This sequence belongs to the peptidase S9A family. As to quaternary structure, monomer.

The protein resides in the periplasm. It catalyses the reaction Hydrolysis of Pro-|-Xaa &gt;&gt; Ala-|-Xaa in oligopeptides.. Functionally, cleaves peptide bonds on the C-terminal side of prolyl residues within peptides that are up to approximately 30 amino acids long. Has an absolute requirement for an X-Pro bond in the trans configuration immediately preceding the Pro-Y scissible bond. This is Prolyl endopeptidase (f1pep1) from Elizabethkingia meningoseptica (Chryseobacterium meningosepticum).